A 432-amino-acid polypeptide reads, in one-letter code: Adenosine 3'-phospho 5'-phosphosulfate transporter 1 (432 aa).

Helical transmembrane passes span 5 to 25 (WWAV…ETPE), 40 to 60 (VVNA…VQYF), 109 to 129 (ALKL…WGVL), 154 to 174 (FLVL…CVLC), 238 to 258 (WEYL…LSSG), 265 to 285 (PATT…DSFT), 299 to 319 (SVQM…GSLL), 353 to 373 (LFIF…IMTL), and 387 to 407 (GHTV…ALLL). Position 427 is a phosphoserine (Ser427).

This sequence belongs to the nucleotide-sugar transporter family. SLC35B subfamily.

The protein localises to the golgi apparatus membrane. The enzyme catalyses 3'-phosphoadenylyl sulfate(in) + adenosine 3',5'-bisphosphate(out) = 3'-phosphoadenylyl sulfate(out) + adenosine 3',5'-bisphosphate(in). In terms of biological role, probably functions as a 3'-phosphoadenylyl sulfate:adenosine 3',5'-bisphosphate antiporter at the Golgi membranes. Mediates the transport from the cytosol into the lumen of the Golgi of 3'-phosphoadenylyl sulfate/adenosine 3'-phospho 5'-phosphosulfate (PAPS), a universal sulfuryl donor for sulfation events that take place in that compartment. The protein is Adenosine 3'-phospho 5'-phosphosulfate transporter 1 of Pongo abelii (Sumatran orangutan).